The chain runs to 75 residues: UPF0352 protein plu2871 (75 aa).

The protein belongs to the UPF0352 family.

The protein is UPF0352 protein plu2871 of Photorhabdus laumondii subsp. laumondii (strain DSM 15139 / CIP 105565 / TT01) (Photorhabdus luminescens subsp. laumondii).